The sequence spans 496 residues: Lysine--tRNA ligase (496 aa).

Positions 409 and 416 each coordinate Mg(2+).

This sequence belongs to the class-II aminoacyl-tRNA synthetase family. As to quaternary structure, homodimer. Requires Mg(2+) as cofactor.

It is found in the cytoplasm. It catalyses the reaction tRNA(Lys) + L-lysine + ATP = L-lysyl-tRNA(Lys) + AMP + diphosphate. This is Lysine--tRNA ligase from Streptococcus mutans serotype c (strain ATCC 700610 / UA159).